The sequence spans 906 residues: Protein translocase subunit SecA (906 aa).

Residues Q86, 104–108 (GEGKT), and D499 each bind ATP. Residues 865–885 (VSRIDPKDRNPEDPTSWGRVS) are disordered. Residues C890, C892, C901, and H902 each contribute to the Zn(2+) site.

Belongs to the SecA family. In terms of assembly, monomer and homodimer. Part of the essential Sec protein translocation apparatus which comprises SecA, SecYEG and auxiliary proteins SecDF-YajC and YidC. Zn(2+) is required as a cofactor.

It is found in the cell inner membrane. The protein localises to the cytoplasm. It catalyses the reaction ATP + H2O + cellular proteinSide 1 = ADP + phosphate + cellular proteinSide 2.. Functionally, part of the Sec protein translocase complex. Interacts with the SecYEG preprotein conducting channel. Has a central role in coupling the hydrolysis of ATP to the transfer of proteins into and across the cell membrane, serving both as a receptor for the preprotein-SecB complex and as an ATP-driven molecular motor driving the stepwise translocation of polypeptide chains across the membrane. The polypeptide is Protein translocase subunit SecA (Rickettsia canadensis (strain McKiel)).